The primary structure comprises 193 residues: Acyl carrier protein phosphodiesterase (193 aa).

Belongs to the AcpH family.

The catalysed reaction is holo-[ACP] + H2O = apo-[ACP] + (R)-4'-phosphopantetheine + H(+). In terms of biological role, converts holo-ACP to apo-ACP by hydrolytic cleavage of the phosphopantetheine prosthetic group from ACP. In Yersinia pestis, this protein is Acyl carrier protein phosphodiesterase.